Here is a 557-residue protein sequence, read N- to C-terminus: Potassium-transporting ATPase potassium-binding subunit (557 aa).

A run of 12 helical transmembrane segments spans residues 5-25, 63-83, 132-152, 170-190, 253-273, 283-303, 329-349, 356-376, 379-399, 416-436, 484-504, and 526-546; these read GFLL…PLGS, LCAI…MLLG, GLTV…FALI, LLRI…LFFI, FVQM…FGEV, LLWA…WAEV, VLVS…AVIA, ALGG…FGGV, GLYG…LMIG, LTAL…ALAM, LLAF…MAIA, and LFVG…FIPA.

This sequence belongs to the KdpA family. In terms of assembly, the system is composed of three essential subunits: KdpA, KdpB and KdpC.

The protein resides in the cell inner membrane. Its function is as follows. Part of the high-affinity ATP-driven potassium transport (or Kdp) system, which catalyzes the hydrolysis of ATP coupled with the electrogenic transport of potassium into the cytoplasm. This subunit binds the periplasmic potassium ions and delivers the ions to the membrane domain of KdpB through an intramembrane tunnel. The protein is Potassium-transporting ATPase potassium-binding subunit of Escherichia coli O17:K52:H18 (strain UMN026 / ExPEC).